Reading from the N-terminus, the 68-residue chain is Pleurocidin-like peptide WF4 (68 aa).

An N-terminal signal peptide occupies residues 1 to 22; that stretch reads MKFTATFLMMFIFVLMVEPGEC. Residues 48 to 68 constitute a propeptide that is removed on maturation; that stretch reads GEQQDLDKRAVDEDPNVIVFE.

This sequence belongs to the pleurocidin family.

Its subcellular location is the secreted. In terms of biological role, antimicrobial peptide. This Pseudopleuronectes americanus (Winter flounder) protein is Pleurocidin-like peptide WF4 (ple4).